An 87-amino-acid polypeptide reads, in one-letter code: Envelope glycoprotein N (87 aa).

The first 24 residues, 1–24 (MGSITASFILITMQILFFCEDSSG), serve as a signal peptide directing secretion. The Virion surface portion of the chain corresponds to 25–48 (EPNFAERNFWHASCSARGVYIDGS). A helical transmembrane segment spans residues 49 to 69 (MITTLFFYASLLGVCVALISL). The Intravirion segment spans residues 70-87 (AYHACFRLFTRSVLRSTW).

Belongs to the herpesviridae glycoprotein N family. In terms of assembly, interacts (via N-terminus) with gM (via N-terminus). The gM-gN heterodimer forms the gCII complex.

It localises to the virion membrane. It is found in the host membrane. Its subcellular location is the host Golgi apparatus. The protein resides in the host trans-Golgi network. In terms of biological role, envelope glycoprotein necessary for proper maturation of gM and modulation of its membrane fusion activity. Also plays a critical role in virion morphogenesis. The chain is Envelope glycoprotein N from Varicella-zoster virus (strain Dumas) (HHV-3).